A 257-amino-acid chain; its full sequence is Dihydroorotate dehydrogenase B (NAD(+)), electron transfer subunit (257 aa).

In terms of domain architecture, FAD-binding FR-type spans 2-102 (IGRERMTVVS…LGPLGHGFPL (101 aa)). FAD is bound by residues 53–56 (RPLS), 70–72 (IYR), and 77–78 (GT). Residues Cys221, Cys226, Cys229, and Cys244 each contribute to the [2Fe-2S] cluster site.

The protein belongs to the PyrK family. As to quaternary structure, heterotetramer of 2 PyrK and 2 PyrD type B subunits. [2Fe-2S] cluster serves as cofactor. Requires FAD as cofactor.

The protein operates within pyrimidine metabolism; UMP biosynthesis via de novo pathway; orotate from (S)-dihydroorotate (NAD(+) route): step 1/1. Functionally, responsible for channeling the electrons from the oxidation of dihydroorotate from the FMN redox center in the PyrD type B subunit to the ultimate electron acceptor NAD(+). This chain is Dihydroorotate dehydrogenase B (NAD(+)), electron transfer subunit, found in Geobacillus thermodenitrificans (strain NG80-2).